Consider the following 215-residue polypeptide: UPF0126 membrane protein DR_2368 (215 aa).

The next 6 helical transmembrane spans lie at 15 to 35 (LHWL…LLGV), 39 to 59 (FDLF…GAIR), 75 to 95 (TYLW…ERLA), 101 to 121 (LSLF…LGAI), 123 to 143 (IGLG…GGGI), and 162 to 182 (LYAT…PHFT).

It belongs to the UPF0126 family.

It is found in the cell membrane. The polypeptide is UPF0126 membrane protein DR_2368 (Deinococcus radiodurans (strain ATCC 13939 / DSM 20539 / JCM 16871 / CCUG 27074 / LMG 4051 / NBRC 15346 / NCIMB 9279 / VKM B-1422 / R1)).